Here is an 800-residue protein sequence, read N- to C-terminus: MLISNEWLKEYVTIDDSVSDLAERITRTGIEVDDLIDYTKDIKNLVVGFVKSKEKHPDADKLNVCQVDIGEDEPVQIVCGAPNVDAGQYVIVAKVGGRLPGGIKIKRAKLRGERSEGMICSLQEIGISSNYIPKSFESGIYVFSESQVPGTDALQALYLDDQVMEFDLTPNRADALSMIGTAYEVAALYNTKMTKPETTSNELELSANDELTVTIENEDKVPYYSARVVHDVTIEPSPIWMQARLIKAGIRPINNVVDISNYVLLEYGQPLHMFDQDAIGSQQIVVRQANEGEKMTTLDDTERELLTSDIVITNGQTPIALAGVMGGDFSEVKEQTSNIVIEGAIFDPVSIRHTSRRLNLRSESSSRFEKGIATEFVDEAVDRACYLLQTYANGKVLKDRVSSGELGAFITPIDITADKINRTIGFDLSQNDIVTIFNQLGFDTEINDDVITVLVPSRRKDITIKEDLIEEVARIYGYDDIPSTLPVFDKVTSGQLTDRQYKTRMVKEVLEGAGLDQAITYSLVSKEDATAFSMQQRQTIDLLMPMSEAHASLRQSLLPHLIEVASYNVARKNKDVKLFEIGNVFFANGEGELPDQVEYLSGILTGDYVVNQWQGKKETVDFYLAKGVVDRVSEKLNLEFSYRRADIDGLHPGRTAEILLENKVVGFIGELHPTLAADNDLKRTYVFELNFDALMAVSVGYINYQPIPRFPGMSRDIALEVDQNIPAADLLSTIHAHGGNILKDTLVFDVYQGEHLEKGKKSIAIRLNYLDTEETLTDERVSKVQAEIEAALIEQGAVIR.

Residues threonine 39–leucine 154 enclose the tRNA-binding domain. A B5 domain is found at alanine 408–serine 483. Residues aspartate 461, aspartate 467, glutamate 470, and glutamate 471 each coordinate Mg(2+). One can recognise an FDX-ACB domain in the interval proline 708–arginine 800.

This sequence belongs to the phenylalanyl-tRNA synthetase beta subunit family. Type 1 subfamily. Tetramer of two alpha and two beta subunits. It depends on Mg(2+) as a cofactor.

Its subcellular location is the cytoplasm. The enzyme catalyses tRNA(Phe) + L-phenylalanine + ATP = L-phenylalanyl-tRNA(Phe) + AMP + diphosphate + H(+). This chain is Phenylalanine--tRNA ligase beta subunit, found in Staphylococcus aureus.